The chain runs to 258 residues: Proteasome subunit alpha type-3 (258 aa).

Glycyl lysine isopeptide (Lys-Gly) (interchain with G-Cter in ubiquitin) cross-links involve residues Lys-100, Lys-199, and Lys-231.

Belongs to the peptidase T1A family. In terms of assembly, the 26S proteasome consists of a 20S proteasome core and two 19S regulatory subunits. The 20S proteasome core is composed of 28 subunits that are arranged in four stacked rings, resulting in a barrel-shaped structure. The two end rings are each formed by seven alpha subunits, and the two central rings are each formed by seven beta subunits. The catalytic chamber with the active sites is on the inside of the barrel.

Its subcellular location is the cytoplasm. The protein resides in the nucleus. In terms of biological role, the proteasome degrades poly-ubiquitinated proteins in the cytoplasm and in the nucleus. It is essential for the regulated turnover of proteins and for the removal of misfolded proteins. The proteasome is a multicatalytic proteinase complex that is characterized by its ability to cleave peptides with Arg, Phe, Tyr, Leu, and Glu adjacent to the leaving group at neutral or slightly basic pH. It has an ATP-dependent proteolytic activity. This is Proteasome subunit alpha type-3 (PRE9) from Saccharomyces cerevisiae (strain ATCC 204508 / S288c) (Baker's yeast).